Reading from the N-terminus, the 387-residue chain is S-adenosylmethionine synthase (387 aa).

His16 provides a ligand contact to ATP. Asp18 provides a ligand contact to Mg(2+). Residue Glu44 coordinates K(+). Glu57 and Gln100 together coordinate L-methionine. The tract at residues 100-110 (QSADIAVGVDE) is flexible loop. Residues 165–167 (DAK), Asp241, 247–248 (RK), Ala264, and Lys268 contribute to the ATP site. Residue Asp241 participates in L-methionine binding. Lys272 lines the L-methionine pocket.

The protein belongs to the AdoMet synthase family. Homotetramer; dimer of dimers. Mg(2+) serves as cofactor. K(+) is required as a cofactor.

It is found in the cytoplasm. It catalyses the reaction L-methionine + ATP + H2O = S-adenosyl-L-methionine + phosphate + diphosphate. It participates in amino-acid biosynthesis; S-adenosyl-L-methionine biosynthesis; S-adenosyl-L-methionine from L-methionine: step 1/1. Functionally, catalyzes the formation of S-adenosylmethionine (AdoMet) from methionine and ATP. The overall synthetic reaction is composed of two sequential steps, AdoMet formation and the subsequent tripolyphosphate hydrolysis which occurs prior to release of AdoMet from the enzyme. The protein is S-adenosylmethionine synthase of Marinomonas sp. (strain MWYL1).